The sequence spans 311 residues: Aspartate carbamoyltransferase catalytic subunit (311 aa).

2 residues coordinate carbamoyl phosphate: R55 and T56. K85 contacts L-aspartate. The carbamoyl phosphate site is built by R106, H135, and Q138. Positions 168 and 230 each coordinate L-aspartate. Carbamoyl phosphate contacts are provided by L268 and P269.

It belongs to the aspartate/ornithine carbamoyltransferase superfamily. ATCase family. As to quaternary structure, heterododecamer (2C3:3R2) of six catalytic PyrB chains organized as two trimers (C3), and six regulatory PyrI chains organized as three dimers (R2).

The enzyme catalyses carbamoyl phosphate + L-aspartate = N-carbamoyl-L-aspartate + phosphate + H(+). Its pathway is pyrimidine metabolism; UMP biosynthesis via de novo pathway; (S)-dihydroorotate from bicarbonate: step 2/3. In terms of biological role, catalyzes the condensation of carbamoyl phosphate and aspartate to form carbamoyl aspartate and inorganic phosphate, the committed step in the de novo pyrimidine nucleotide biosynthesis pathway. This Yersinia enterocolitica serotype O:8 / biotype 1B (strain NCTC 13174 / 8081) protein is Aspartate carbamoyltransferase catalytic subunit.